The chain runs to 147 residues: MSKALIKFIRLSPTKARLIAREVQGMNAELAMASLKFMPNKGAKYIANAISSAVANGGFEANEVVVKSCRVDAAAVLKRFRPRARGSASRIRKPTSHILVEVAKAEVKAEEKKTVAKKAPAAKKTTTTKAPAKKTTSTKKATAKKES.

A disordered region spans residues 110-147 (EEKKTVAKKAPAAKKTTTTKAPAKKTTSTKKATAKKES). A compositionally biased stretch (low complexity) spans 117 to 140 (KKAPAAKKTTTTKAPAKKTTSTKK).

Belongs to the universal ribosomal protein uL22 family. In terms of assembly, part of the 50S ribosomal subunit.

Functionally, this protein binds specifically to 23S rRNA; its binding is stimulated by other ribosomal proteins, e.g. L4, L17, and L20. It is important during the early stages of 50S assembly. It makes multiple contacts with different domains of the 23S rRNA in the assembled 50S subunit and ribosome. In terms of biological role, the globular domain of the protein is located near the polypeptide exit tunnel on the outside of the subunit, while an extended beta-hairpin is found that lines the wall of the exit tunnel in the center of the 70S ribosome. In Campylobacter jejuni subsp. jejuni serotype O:23/36 (strain 81-176), this protein is Large ribosomal subunit protein uL22.